The primary structure comprises 221 residues: UPF0758 protein YicR (221 aa).

In terms of domain architecture, MPN spans 99–221 (ALLSPEMTLE…YVSFAERGWI (123 aa)). Residues H170, H172, and D183 each coordinate Zn(2+). The JAMM motif motif lies at 170–183 (HNHPSGCAEPSKAD).

It belongs to the UPF0758 family. YicR subfamily.

In Salmonella arizonae (strain ATCC BAA-731 / CDC346-86 / RSK2980), this protein is UPF0758 protein YicR.